Here is a 169-residue protein sequence, read N- to C-terminus: Probable chemoreceptor glutamine deamidase CheD (169 aa).

Belongs to the CheD family.

The catalysed reaction is L-glutaminyl-[protein] + H2O = L-glutamyl-[protein] + NH4(+). Functionally, probably deamidates glutamine residues to glutamate on methyl-accepting chemotaxis receptors (MCPs), playing an important role in chemotaxis. This Solibacter usitatus (strain Ellin6076) protein is Probable chemoreceptor glutamine deamidase CheD.